We begin with the raw amino-acid sequence, 1095 residues long: DNA polymerase delta catalytic subunit (1095 aa).

Residues 1–11 (MNRSGISKKRP) show a composition bias toward basic residues. The tract at residues 1 to 37 (MNRSGISKKRPPPSNTPPPAGKHRATGDSTPSPAIGT) is disordered. Cysteine 1007, cysteine 1010, cysteine 1020, and cysteine 1023 together coordinate Zn(2+). Residues 1007–1023 (CVGCKVPISNGTLCASC) form a CysA-type zinc finger. [4Fe-4S] cluster-binding residues include cysteine 1052, cysteine 1055, cysteine 1065, and cysteine 1070. The CysB motif motif lies at 1052–1070 (CQECQGSLHQDVLCTSRDC).

This sequence belongs to the DNA polymerase type-B family. In terms of assembly, heterodimer with subunits of 125 kDa and 50 kDa. The 125 kDa subunit contains the polymerase active site and most likely the active site for the 3'-5' exonuclease activity. [4Fe-4S] cluster is required as a cofactor.

It localises to the nucleus. It catalyses the reaction DNA(n) + a 2'-deoxyribonucleoside 5'-triphosphate = DNA(n+1) + diphosphate. Functionally, this polymerase possesses two enzymatic activities: DNA synthesis (polymerase) and an exonucleolytic activity that degrades single-stranded DNA in the 3'- to 5'-direction. The protein is DNA polymerase delta catalytic subunit (POLD1) of Arabidopsis thaliana (Mouse-ear cress).